The sequence spans 327 residues: Phosphate acyltransferase (327 aa).

It belongs to the PlsX family. As to quaternary structure, homodimer. Probably interacts with PlsY.

The protein resides in the cytoplasm. It catalyses the reaction a fatty acyl-[ACP] + phosphate = an acyl phosphate + holo-[ACP]. It functions in the pathway lipid metabolism; phospholipid metabolism. Catalyzes the reversible formation of acyl-phosphate (acyl-PO(4)) from acyl-[acyl-carrier-protein] (acyl-ACP). This enzyme utilizes acyl-ACP as fatty acyl donor, but not acyl-CoA. The protein is Phosphate acyltransferase of Thermotoga neapolitana (strain ATCC 49049 / DSM 4359 / NBRC 107923 / NS-E).